A 252-amino-acid chain; its full sequence is Ribosomal RNA small subunit methyltransferase J (252 aa).

Residues 101 to 102 (RD), 117 to 118 (ER), 153 to 154 (SS), and D171 contribute to the S-adenosyl-L-methionine site.

The protein belongs to the methyltransferase superfamily. RsmJ family.

It localises to the cytoplasm. It carries out the reaction guanosine(1516) in 16S rRNA + S-adenosyl-L-methionine = N(2)-methylguanosine(1516) in 16S rRNA + S-adenosyl-L-homocysteine + H(+). Functionally, specifically methylates the guanosine in position 1516 of 16S rRNA. The sequence is that of Ribosomal RNA small subunit methyltransferase J from Pseudoalteromonas translucida (strain TAC 125).